The following is a 208-amino-acid chain: Mediator of RNA polymerase II transcription subunit 18 (208 aa).

It belongs to the Mediator complex subunit 18 family. As to quaternary structure, component of the Mediator complex.

The protein resides in the nucleus. Its function is as follows. Component of the Mediator complex, a coactivator involved in the regulated transcription of nearly all RNA polymerase II-dependent genes. Mediator functions as a bridge to convey information from gene-specific regulatory proteins to the basal RNA polymerase II transcription machinery. Mediator is recruited to promoters by direct interactions with regulatory proteins and serves as a scaffold for the assembly of a functional preinitiation complex with RNA polymerase II and the general transcription factors. The protein is Mediator of RNA polymerase II transcription subunit 18 (med18) of Danio rerio (Zebrafish).